Reading from the N-terminus, the 157-residue chain is Endoribonuclease YbeY (157 aa).

Zn(2+) contacts are provided by histidine 114, histidine 118, and histidine 124.

This sequence belongs to the endoribonuclease YbeY family. Zn(2+) serves as cofactor.

Its subcellular location is the cytoplasm. Single strand-specific metallo-endoribonuclease involved in late-stage 70S ribosome quality control and in maturation of the 3' terminus of the 16S rRNA. The polypeptide is Endoribonuclease YbeY (Salmonella typhimurium (strain LT2 / SGSC1412 / ATCC 700720)).